The following is a 312-amino-acid chain: Olfactory receptor 52A1 (312 aa).

The Extracellular portion of the chain corresponds to Met1–Cys27. An N-linked (GlcNAc...) asparagine glycan is attached at Asn5. The chain crosses the membrane as a helical span at residues Trp28–Leu48. Over Ser49–Ser56 the chain is Cytoplasmic. Residues Leu57–Ser77 form a helical membrane-spanning segment. Residues Ser78–Leu101 lie on the Extracellular side of the membrane. Cys99 and Cys182 are joined by a disulfide. Residues Gln102–Leu122 traverse the membrane as a helical segment. Residues Asp123–Gln141 lie on the Cytoplasmic side of the membrane. Residues Leu142–Leu162 form a helical membrane-spanning segment. The Extracellular segment spans residues Val163–Lys199. The chain crosses the membrane as a helical span at residues Ile200–Ser220. Topologically, residues Tyr221–Ala240 are cytoplasmic. A helical transmembrane segment spans residues Phe241–Ser261. At Phe262 to His276 the chain is on the extracellular side. A helical transmembrane segment spans residues Ile277 to Ala297. Topologically, residues Lys298 to Ser312 are cytoplasmic.

This sequence belongs to the G-protein coupled receptor 1 family.

The protein localises to the cell membrane. Functionally, odorant receptor. The sequence is that of Olfactory receptor 52A1 (OR52A1) from Homo sapiens (Human).